Here is a 1120-residue protein sequence, read N- to C-terminus: Phosphatidylinositide phosphatase SAC2 (1120 aa).

Positions 167 to 518 (YKIFMDSDSF…GDTISRQYAG (352 aa)) constitute an SAC domain. A hSac2 domain is found at 593–760 (RGAQEQVSLL…RHSKPHEDIM (168 aa)). Disordered stretches follow at residues 837 to 881 (SSLE…SREN) and 979 to 1008 (PAPK…LPRP). The span at 851–860 (LKDHGPHSEE) shows a compositional bias: basic and acidic residues. Composition is skewed to polar residues over residues 864 to 879 (DSDS…SGSR) and 998 to 1007 (SSHSQNQLPR).

The protein resides in the membrane. It localises to the clathrin-coated pit. The protein localises to the early endosome. Its subcellular location is the recycling endosome. The catalysed reaction is a myo-inositol phosphate + H2O = myo-inositol + phosphate. Functionally, inositol 4-phosphatase which mainly acts on phosphatidylinositol 4-phosphate. May be functionally linked to OCRL, which converts phosphatidylinositol 4,5-bisphosphate to phosphatidylinositol, for a sequential dephosphorylation of phosphatidylinositol 4,5-bisphosphate at the 5 and 4 position of inositol, thus playing an important role in the endocytic recycling. This chain is Phosphatidylinositide phosphatase SAC2, found in Danio rerio (Zebrafish).